A 578-amino-acid polypeptide reads, in one-letter code: MAVSWRSWLANEGVKHLCLFIWLSMNVLLFWKTFLLYNQGPEYHYLHQMLGLGLCLSRASASVLNLNCSLILLPMCRTLLAYLRGSQKVPSRRTRRLLDKSRTFHITCGVTICIFSGVHVAAHLVNALNFSVNYSEDFVELNAARYRDEDPRKLLFTTVPGLTGVCMVVVLFLMITASTYAIRVSNYDIFWYTHNLFFVFYMLLTLHVSGGLLKYQTNLDTHPPGCISLNRTSSQNISLPEYFSEHFHEPFPEGFSKPEEFTQNTFVKICMEEPRFQANFPQTWLWISGPLCLYCAERLYRYIRSNKPVTIISVISHPSDVMEIRMVKENFKARPGQYITLHCPSVSALENHPFTLTMCPTETKATFGVHLKIVGDWTERFRDLLLPPSSQDSEILPFIQSRNYPKLYIDGPFGSPFEESLNYEVSLCVAGGIGVTPFASILNTLLDDWKPYKLRRLYFIWVCRDIQSFRWFADLLCMLHNKFWQENRPDYVNIQLYLSQTDGIQKIIGEKYHALNSRLFIGRPRWKLLFDEIAKYNRGKTVGVFCCGPNSLSKTLHKLSNQINSYGTRFEYNKESFS.

Residues 1-16 (MAVSWRSWLANEGVKH) lie on the Cytoplasmic side of the membrane. A helical transmembrane segment spans residues 17 to 37 (LCLFIWLSMNVLLFWKTFLLY). The Extracellular segment spans residues 38–62 (NQGPEYHYLHQMLGLGLCLSRASAS). The Ferric oxidoreductase domain maps to 58–303 (RASASVLNLN…YCAERLYRYI (246 aa)). A helical membrane pass occupies residues 63–83 (VLNLNCSLILLPMCRTLLAYL). Residues 84-103 (RGSQKVPSRRTRRLLDKSRT) lie on the Cytoplasmic side of the membrane. A helical transmembrane segment spans residues 104-124 (FHITCGVTICIFSGVHVAAHL). Residues 125–154 (VNALNFSVNYSEDFVELNAARYRDEDPRKL) lie on the Extracellular side of the membrane. Asparagine 133 carries N-linked (GlcNAc...) asparagine glycosylation. A helical transmembrane segment spans residues 155-175 (LFTTVPGLTGVCMVVVLFLMI). The Cytoplasmic portion of the chain corresponds to 176–188 (TASTYAIRVSNYD). A helical membrane pass occupies residues 189 to 209 (IFWYTHNLFFVFYMLLTLHVS). Residues 210–424 (GGLLKYQTNL…SPFEESLNYE (215 aa)) are Extracellular-facing. The tract at residues 218–273 (NLDTHPPGCISLNRTSSQNISLPEYFSEHFHEPFPEGFSKPEEFTQNTFVKICMEE) is E-loop; essential for H2O2 generating catalytic activity. N-linked (GlcNAc...) asparagine glycosylation occurs at asparagine 230. A mediates interaction with TLR4 region spans residues 248 to 575 (HEPFPEGFSK…YGTRFEYNKE (328 aa)). One can recognise an FAD-binding FR-type domain in the interval 304-419 (RSNKPVTIIS…DGPFGSPFEE (116 aa)). Residues 425–445 (VSLCVAGGIGVTPFASILNTL) form a helical membrane-spanning segment. Residues 446 to 578 (LDDWKPYKLR…RFEYNKESFS (133 aa)) are Cytoplasmic-facing.

In terms of assembly, interacts with, relocalizes and stabilizes CYBA/p22phox. Interacts with TLR4. Interacts with protein disulfide isomerase. Interacts with PPP1R15A. Interacts with LRRC8A; this interaction prevents the ubiquitin-mediated degradation of LRRC8A. Requires heme as cofactor. Post-translationally, N-glycosylation is required for the function.

It is found in the cytoplasm. Its subcellular location is the endoplasmic reticulum membrane. The protein resides in the cell membrane. It localises to the cell junction. The protein localises to the focal adhesion. It is found in the nucleus. The enzyme catalyses NADPH + 2 O2 = 2 superoxide + NADP(+) + H(+). It carries out the reaction NADPH + O2 + H(+) = H2O2 + NADP(+). Activated by insulin. Inhibited by diphenylene iodonium. Inhibited by plumbagin. Activated by phorbol 12-myristate 13-acetate (PMA). In terms of biological role, NADPH oxidase that catalyzes predominantly the reduction of oxygen to H2O2. Can also catalyze to a smaller extent, the reduction of oxygen to superoxide. May function as an oxygen sensor regulating the KCNK3/TASK-1 potassium channel and HIF1A activity. May regulate insulin signaling cascade. May play a role in apoptosis, bone resorption and lipolysaccharide-mediated activation of NFKB. May produce superoxide in the nucleus and play a role in regulating gene expression upon cell stimulation. Promotes ferroptosis, reactive oxygen species production and reduced glutathione (GSH) levels by activating NLRP3 inflammasome activation and cytokine release. This is NADPH oxidase 4 (NOX4) from Pongo abelii (Sumatran orangutan).